The chain runs to 253 residues: NAD-dependent protein deacylase 2 (253 aa).

A Deacetylase sirtuin-type domain is found at 1-252 (MEDEIRKAAE…VEEVKRLRSE (252 aa)). NAD(+) is bound by residues 23–42 (GAGISAESGIPTFRGEDGLW) and 100–103 (QNID). Catalysis depends on histidine 118, which acts as the Proton acceptor. Zn(2+)-binding residues include cysteine 126, cysteine 129, cysteine 150, and cysteine 153. NAD(+)-binding positions include 191 to 193 (GSS), 217 to 219 (NAE), and alanine 235.

The protein belongs to the sirtuin family. Class III subfamily. Requires Zn(2+) as cofactor.

The protein localises to the cytoplasm. It carries out the reaction N(6)-acetyl-L-lysyl-[protein] + NAD(+) + H2O = 2''-O-acetyl-ADP-D-ribose + nicotinamide + L-lysyl-[protein]. Its function is as follows. NAD-dependent protein deacetylase which modulates the activities of several proteins which are inactive in their acetylated form. Deacetylates the N-terminal lysine residue of Alba, the major archaeal chromatin protein and that, in turn, increases Alba's DNA binding affinity, thereby repressing transcription. The sequence is that of NAD-dependent protein deacylase 2 from Archaeoglobus fulgidus (strain ATCC 49558 / DSM 4304 / JCM 9628 / NBRC 100126 / VC-16).